The following is a 178-amino-acid chain: Methylmalonyl-CoA epimerase, mitochondrial (178 aa).

A mitochondrion-targeting transit peptide spans 1–38; sequence MRRVVKAAALAAGATGLFSRVQTSVAIGRSFSTPQSQF. The region spanning 49 to 178 is the VOC domain; that stretch reads RLNHVAVAVP…GGVLVELEQA (130 aa). H52 is a Co(2+) binding site. K116 carries the post-translational modification N6-succinyllysine. H124 is a binding site for Co(2+). K152 carries the post-translational modification N6-acetyllysine; alternate. At K152 the chain carries N6-succinyllysine; alternate. Position 174 (E174) interacts with Co(2+).

Belongs to the methylmalonyl-CoA epimerase family.

The protein resides in the mitochondrion. The enzyme catalyses (R)-methylmalonyl-CoA = (S)-methylmalonyl-CoA. Its function is as follows. Methylmalonyl-CoA epimerase involved in propionyl-CoA metabolism. The sequence is that of Methylmalonyl-CoA epimerase, mitochondrial from Mus musculus (Mouse).